The chain runs to 189 residues: Protein jagunal homolog (189 aa).

Over 1–34 (MSSRGVRAAGTDGNDFQNRQRIAQHYQESAQYKS) the chain is Cytoplasmic. Residues 35-55 (VLKWFFVPHFLILVFMWLKVG) traverse the membrane as a helical segment. The Lumenal segment spans residues 56–75 (SEFLRYNFGWKNAFFERLDM). Residues 76–96 (PAAYPWEYVWCLSFIPIVLAL) traverse the membrane as a helical segment. Residues 97-105 (SSFQRNKLK) are Cytoplasmic-facing. A helical membrane pass occupies residues 106-126 (VLHYAYYAEFICGIFPCMIGL). The Lumenal segment spans residues 127–150 (GGQLPELLEYANDMEGSNTPTFKG). The helical transmembrane segment at 151–171 (IFPMVIIWYIFFAVALQIHGF) threads the bilayer. The Cytoplasmic portion of the chain corresponds to 172–189 (SMYFMHHLAAAWAPVKRD).

This sequence belongs to the jagunal family.

The protein resides in the endoplasmic reticulum membrane. The polypeptide is Protein jagunal homolog (Caenorhabditis briggsae).